The primary structure comprises 465 residues: Cysteine--tRNA ligase (465 aa).

Cys30 serves as a coordination point for Zn(2+). The 'HIGH' region signature appears at 32–42; the sequence is ITVYDYCHVGH. Zn(2+) contacts are provided by Cys214, His239, and Glu243. The 'KMSKS' region motif lies at 271–275; that stretch reads KMSKS. Lys274 serves as a coordination point for ATP.

Belongs to the class-I aminoacyl-tRNA synthetase family. Monomer. Zn(2+) serves as cofactor.

Its subcellular location is the cytoplasm. It carries out the reaction tRNA(Cys) + L-cysteine + ATP = L-cysteinyl-tRNA(Cys) + AMP + diphosphate. The polypeptide is Cysteine--tRNA ligase (Burkholderia vietnamiensis (strain G4 / LMG 22486) (Burkholderia cepacia (strain R1808))).